Reading from the N-terminus, the 1094-residue chain is Probable arabinosyltransferase C (1094 aa).

13 helical membrane-spanning segments follow: residues isoleucine 28–leucine 50, alanine 232–leucine 251, proline 264–phenylalanine 286, serine 341–serine 360, threonine 373–leucine 392, isoleucine 431–isoleucine 453, arginine 466–phenylalanine 488, serine 530–leucine 552, serine 565–threonine 582, tryptophan 586–valine 608, threonine 620–tyrosine 642, tryptophan 657–phenylalanine 679, and leucine 700–serine 722. The segment covering glycine 817–glycine 831 has biased composition (low complexity). A disordered region spans residues glycine 817–arginine 836.

The protein belongs to the emb family.

Its subcellular location is the cell membrane. Arabinosyl transferase responsible for the polymerization of arabinose into the arabinan of arabinogalactan. The chain is Probable arabinosyltransferase C (embC) from Mycobacterium tuberculosis (strain CDC 1551 / Oshkosh).